The chain runs to 872 residues: Alanine--tRNA ligase (872 aa).

Zn(2+)-binding residues include His-567, His-571, Cys-669, and His-673.

It belongs to the class-II aminoacyl-tRNA synthetase family. The cofactor is Zn(2+).

The protein localises to the cytoplasm. It carries out the reaction tRNA(Ala) + L-alanine + ATP = L-alanyl-tRNA(Ala) + AMP + diphosphate. Its function is as follows. Catalyzes the attachment of alanine to tRNA(Ala) in a two-step reaction: alanine is first activated by ATP to form Ala-AMP and then transferred to the acceptor end of tRNA(Ala). Also edits incorrectly charged Ser-tRNA(Ala) and Gly-tRNA(Ala) via its editing domain. The protein is Alanine--tRNA ligase of Streptococcus agalactiae serotype III (strain NEM316).